We begin with the raw amino-acid sequence, 368 residues long: Biotin synthase (368 aa).

In terms of domain architecture, Radical SAM core spans 46–277 (VHGDEVALCG…AAHIFVMGGR (232 aa)). Residues Cys-64, Cys-68, and Cys-71 each contribute to the [4Fe-4S] cluster site. Residues Ser-109, Cys-142, and Cys-202 each coordinate [2Fe-2S] cluster. The segment at 347 to 368 (RAAEPGGKRGLPVVGPPRGGCA) is disordered.

It belongs to the radical SAM superfamily. Biotin synthase family. As to quaternary structure, homodimer. Requires [4Fe-4S] cluster as cofactor. [2Fe-2S] cluster is required as a cofactor.

The catalysed reaction is (4R,5S)-dethiobiotin + (sulfur carrier)-SH + 2 reduced [2Fe-2S]-[ferredoxin] + 2 S-adenosyl-L-methionine = (sulfur carrier)-H + biotin + 2 5'-deoxyadenosine + 2 L-methionine + 2 oxidized [2Fe-2S]-[ferredoxin]. The protein operates within cofactor biosynthesis; biotin biosynthesis; biotin from 7,8-diaminononanoate: step 2/2. Functionally, catalyzes the conversion of dethiobiotin (DTB) to biotin by the insertion of a sulfur atom into dethiobiotin via a radical-based mechanism. The protein is Biotin synthase of Anaeromyxobacter sp. (strain Fw109-5).